Here is a 443-residue protein sequence, read N- to C-terminus: Protoheme IX farnesyltransferase, mitochondrial (443 aa).

7 consecutive transmembrane segments (helical) span residues 174 to 194, 235 to 255, 257 to 277, 280 to 300, 309 to 329, 364 to 384, and 411 to 431; these read AAGFALAPGPFDWPCFLLTSV, LAVSFATCCAVPGVAILTLGV, PLTGALGLFNIFLYTCCYTPL, ISIANTWVGAVVGAIPPVMGW, AGAFLLGGILYSWQFPHFNAL, LLVLSAAAPVLDITTWTFPIM, and LFFCSLWHLPLLLLLMLTCKR.

Belongs to the UbiA prenyltransferase family.

The protein localises to the mitochondrion membrane. It carries out the reaction heme b + (2E,6E)-farnesyl diphosphate + H2O = Fe(II)-heme o + diphosphate. In terms of biological role, converts protoheme IX and farnesyl diphosphate to heme O. The chain is Protoheme IX farnesyltransferase, mitochondrial (COX10) from Pongo abelii (Sumatran orangutan).